Reading from the N-terminus, the 73-residue chain is NAD(P)H-quinone oxidoreductase subunit L (73 aa).

2 consecutive transmembrane segments (helical) span residues 6–26 (SLIGLTYAGLAVLYLLVLPLL) and 44–64 (VLMFFLVLFFFPGMVLLAPFM).

It belongs to the complex I NdhL subunit family. In terms of assembly, NDH-1 can be composed of about 15 different subunits; different subcomplexes with different compositions have been identified which probably have different functions.

It localises to the cellular thylakoid membrane. It carries out the reaction a plastoquinone + NADH + (n+1) H(+)(in) = a plastoquinol + NAD(+) + n H(+)(out). The enzyme catalyses a plastoquinone + NADPH + (n+1) H(+)(in) = a plastoquinol + NADP(+) + n H(+)(out). NDH-1 shuttles electrons from an unknown electron donor, via FMN and iron-sulfur (Fe-S) centers, to quinones in the respiratory and/or the photosynthetic chain. The immediate electron acceptor for the enzyme in this species is believed to be plastoquinone. Couples the redox reaction to proton translocation, and thus conserves the redox energy in a proton gradient. Cyanobacterial NDH-1 also plays a role in inorganic carbon-concentration. The sequence is that of NAD(P)H-quinone oxidoreductase subunit L from Synechococcus sp. (strain JA-2-3B'a(2-13)) (Cyanobacteria bacterium Yellowstone B-Prime).